Consider the following 603-residue polypeptide: Extracellular basic protease (603 aa).

A signal peptide spans 1 to 21 (MNLSNISAVKVLTLVVSAAIA). Residues 22–132 (GQVCAAESIV…VEVDRLAYPK (111 aa)) constitute a propeptide that is removed on maturation. Residues 143-468 (QWHYFGNYGV…SGIVDANAAV (326 aa)) form the Peptidase S8 domain. Asp-173 serves as the catalytic Charge relay system. A disordered region spans residues 197 to 221 (PNARDGDQRDNNPADEGDWFDNWDC). 2 disulfide bridges follow: Cys-221–Cys-273 and Cys-315–Cys-352. His-237 serves as the catalytic Charge relay system. Residue Ser-409 is the Charge relay system of the active site. The propeptide occupies 477 to 603 (RAQPRPPVNQ…GSIDSWSLTF (127 aa)). The P/Homo B domain maps to 478-603 (AQPRPPVNQP…GSIDSWSLTF (126 aa)).

It belongs to the peptidase S8 family.

The protein resides in the secreted. This is Extracellular basic protease (bprV) from Dichelobacter nodosus (Bacteroides nodosus).